Reading from the N-terminus, the 99-residue chain is Large ribosomal subunit protein uL23 (99 aa).

Belongs to the universal ribosomal protein uL23 family. In terms of assembly, part of the 50S ribosomal subunit. Contacts protein L29, and trigger factor when it is bound to the ribosome.

In terms of biological role, one of the early assembly proteins it binds 23S rRNA. One of the proteins that surrounds the polypeptide exit tunnel on the outside of the ribosome. Forms the main docking site for trigger factor binding to the ribosome. The protein is Large ribosomal subunit protein uL23 of Saccharopolyspora erythraea (strain ATCC 11635 / DSM 40517 / JCM 4748 / NBRC 13426 / NCIMB 8594 / NRRL 2338).